The primary structure comprises 493 residues: Glutamyl-tRNA(Gln) amidotransferase subunit A (493 aa).

Catalysis depends on charge relay system residues Lys81 and Ser156. Residue Ser180 is the Acyl-ester intermediate of the active site.

It belongs to the amidase family. GatA subfamily. As to quaternary structure, heterotrimer of A, B and C subunits.

The enzyme catalyses L-glutamyl-tRNA(Gln) + L-glutamine + ATP + H2O = L-glutaminyl-tRNA(Gln) + L-glutamate + ADP + phosphate + H(+). Allows the formation of correctly charged Gln-tRNA(Gln) through the transamidation of misacylated Glu-tRNA(Gln) in organisms which lack glutaminyl-tRNA synthetase. The reaction takes place in the presence of glutamine and ATP through an activated gamma-phospho-Glu-tRNA(Gln). The chain is Glutamyl-tRNA(Gln) amidotransferase subunit A from Mycolicibacterium paratuberculosis (strain ATCC BAA-968 / K-10) (Mycobacterium paratuberculosis).